We begin with the raw amino-acid sequence, 165 residues long: Endoribonuclease YbeY (165 aa).

Positions 131, 135, and 141 each coordinate Zn(2+).

This sequence belongs to the endoribonuclease YbeY family. The cofactor is Zn(2+).

It localises to the cytoplasm. Functionally, single strand-specific metallo-endoribonuclease involved in late-stage 70S ribosome quality control and in maturation of the 3' terminus of the 16S rRNA. The protein is Endoribonuclease YbeY of Lachnoclostridium phytofermentans (strain ATCC 700394 / DSM 18823 / ISDg) (Clostridium phytofermentans).